The sequence spans 149 residues: Transcriptional regulator MraZ (149 aa).

SpoVT-AbrB domains follow at residues 7-54 (KYVN…GISH) and 83-126 (AVQL…QPQN).

It belongs to the MraZ family. In terms of assembly, forms oligomers.

It localises to the cytoplasm. It is found in the nucleoid. In Rickettsia peacockii (strain Rustic), this protein is Transcriptional regulator MraZ.